We begin with the raw amino-acid sequence, 418 residues long: Protein FAM53A (418 aa).

Disordered stretches follow at residues 198-236 (TSPVPRPSSASSGFVDSSEGSTSSSTRWNSGGPCDFNPR) and 248-269 (ETGNLLPSANSTPTSTPELSRR). Residues 205–229 (SSASSGFVDSSEGSTSSSTRWNSGG) show a composition bias toward low complexity. Over residues 248 to 265 (ETGNLLPSANSTPTSTPE) the composition is skewed to polar residues. The Nuclear localization signal motif lies at 285–293 (KKSRLKRRR).

Belongs to the FAM53 family.

The protein localises to the nucleus. Functionally, may play an important role in neural development; the dorsomedial roof of the third ventricle. The polypeptide is Protein FAM53A (Gallus gallus (Chicken)).